Reading from the N-terminus, the 327-residue chain is MKIIPYRKRSVLIATIFAISAVGITGCSDNTETKAVERVEEAAALARVKDLEARAEALKSNMPAANDMTATAGGTDTASGKPTIKMPDESTIPDDEFGAAVRRGLQISNHTYKELPNNVGNQLNCTSCHLGNGSEAYAAPWNNTPSVYPNYSKRTGRINTIQERINGCFERSLNGKALDLNSDDMNAMVSYMSWLSQDMPFGVSPEGSGFVKVDKTLEPNTDNGKKLFAEKCSVCHGATGEGQYNDDGTYVYPAIAGDKSFNDGAGMARTYTAASFIKGKMPFGQGGSLSDQEAVDIASYFTHLPRPIKANKDKDWPNGDAPKDVRR.

An N-terminal signal peptide occupies residues 1-26 (MKIIPYRKRSVLIATIFAISAVGITG). A compositionally biased stretch (low complexity) spans 66–78 (NDMTATAGGTDTA). Residues 66–93 (NDMTATAGGTDTASGKPTIKMPDESTIP) are disordered. 2 consecutive Cytochrome c domains span residues 99–196 (AAVR…SWLS) and 219–305 (PNTD…THLP). Residues cysteine 125, cysteine 128, histidine 129, cysteine 232, cysteine 235, and histidine 236 each coordinate heme c.

As to quaternary structure, monomer. In terms of processing, binds 2 heme c groups covalently per subunit.

It is found in the periplasm. The catalysed reaction is 2 thiosulfate + 2 Fe(III)-[cytochrome c] = tetrathionate + 2 Fe(II)-[cytochrome c] + 2 H(+). Its function is as follows. Catalyzes the oxidation of 2 molecules of thiosulfate to tetrathionate. The chain is Thiosulfate dehydrogenase (tsdA) from Psychrobacter arcticus (strain DSM 17307 / VKM B-2377 / 273-4).